The sequence spans 359 residues: Histidinol-phosphate aminotransferase (359 aa).

The residue at position 217 (Lys-217) is an N6-(pyridoxal phosphate)lysine.

This sequence belongs to the class-II pyridoxal-phosphate-dependent aminotransferase family. Histidinol-phosphate aminotransferase subfamily. Homodimer. Pyridoxal 5'-phosphate is required as a cofactor.

It carries out the reaction L-histidinol phosphate + 2-oxoglutarate = 3-(imidazol-4-yl)-2-oxopropyl phosphate + L-glutamate. The protein operates within amino-acid biosynthesis; L-histidine biosynthesis; L-histidine from 5-phospho-alpha-D-ribose 1-diphosphate: step 7/9. This chain is Histidinol-phosphate aminotransferase, found in Salmonella newport (strain SL254).